Consider the following 602-residue polypeptide: Myotubularin (602 aa).

Residues 1–16 (MATSSTPKYNSNSLEN) show a composition bias toward polar residues. Residues 1–33 (MATSSTPKYNSNSLENSVRRSPGDGINHEQNDE) form a disordered region. Positions 17–33 (SVRRSPGDGINHEQNDE) are enriched in basic and acidic residues. In terms of domain architecture, GRAM spans 28–96 (HEQNDEISRL…GVIARIEKMG (69 aa)). The Myotubularin phosphatase domain occupies 162 to 537 (GWAVYDAMTE…RHLELWVNYY (376 aa)). Residues Asn287, Asn312, and Ile313 each contribute to the a 1,2-diacyl-sn-glycero-3-phospho-(1D-myo-inositol-3,5-bisphosphate) site. A 1,2-diacyl-sn-glycero-3-phospho-(1D-myo-inositol-3-phosphate) contacts are provided by Asn287, Asn312, and Ile313. Cys374 acts as the Phosphocysteine intermediate in catalysis. Residues Ser375, Asp376, Gly377, Trp378, Asp379, Arg380, Lys416, and Arg420 each coordinate a 1,2-diacyl-sn-glycero-3-phospho-(1D-myo-inositol-3,5-bisphosphate). A 1,2-diacyl-sn-glycero-3-phospho-(1D-myo-inositol-3-phosphate) contacts are provided by Ser375, Asp376, Gly377, Trp378, Asp379, and Arg380. Residue Arg420 participates in a 1,2-diacyl-sn-glycero-3-phospho-(1D-myo-inositol-3-phosphate) binding. The tract at residues 577-602 (NSPKINRSTTSPSSPSQMMPQVQTPF) is disordered. Positions 584-602 (STTSPSSPSQMMPQVQTPF) are enriched in low complexity.

It belongs to the protein-tyrosine phosphatase family. Non-receptor class myotubularin subfamily.

The protein resides in the cytoplasm. Its subcellular location is the cell membrane. It is found in the cell projection. It localises to the filopodium. The protein localises to the ruffle. The protein resides in the late endosome. Its subcellular location is the myofibril. It is found in the sarcomere. It catalyses the reaction a 1,2-diacyl-sn-glycero-3-phospho-(1D-myo-inositol-3-phosphate) + H2O = a 1,2-diacyl-sn-glycero-3-phospho-(1D-myo-inositol) + phosphate. The catalysed reaction is a 1,2-diacyl-sn-glycero-3-phospho-(1D-myo-inositol-3,5-bisphosphate) + H2O = a 1,2-diacyl-sn-glycero-3-phospho-(1D-myo-inositol-5-phosphate) + phosphate. The enzyme catalyses 1,2-dioctanoyl-sn-glycero-3-phospho-(1-D-myo-inositol-3-phosphate) + H2O = 1,2-dioctanoyl-sn-glycero-3-phospho-(1D-myo-inositol) + phosphate. It carries out the reaction 1,2-dioctanoyl-sn-glycero-3-phospho-(1D-myo-inositol-3,5-bisphosphate) + H2O = 1,2-dioctanoyl-sn-glycero-3-phospho-(1D-myo-inositol-5-phosphate) + phosphate. It catalyses the reaction 1,2-dihexadecanoyl-sn-glycero-3-phospho-(1D-myo-inositol-3,5-phosphate) + H2O = 1,2-dihexadecanoyl-sn-glycero-3-phospho-(1D-myo-inositol-5-phosphate) + phosphate. Functionally, lipid phosphatase which dephosphorylates phosphatidylinositol 3-monophosphate (PI3P) and phosphatidylinositol 3,5-bisphosphate (PI(3,5)P2). The sequence is that of Myotubularin (mtm1) from Xenopus laevis (African clawed frog).